Reading from the N-terminus, the 116-residue chain is Dynein light chain Tctex-type 3 (116 aa).

Residue Tyr-4 is modified to 3'-nitrotyrosine.

This sequence belongs to the dynein light chain Tctex-type family. As to quaternary structure, homodimer. The cytoplasmic dynein 1 complex consists of two catalytic heavy chains (HCs) and a number of non-catalytic subunits presented by intermediate chains (ICs), light intermediate chains (LICs) and light chains (LCs); the composition seems to vary in respect to the IC, LIC and LC composition. The heavy chain homodimer serves as a scaffold for the probable homodimeric assembly of the respective non-catalytic subunits. The ICs and LICs bind directly to the HC dimer and the LCs assemble on the IC dimer. DYNLT1 and DYNLT3 compete for association with dynein IC (DYNC1I1 or DYNC1I2). Self-associates. Interacts with DYNC1I1 and DYNC1I2. Interacts with BUB3. Interacts with SATB1 in nucleus to form complex with matrix attachment regions (MARs) of DNA.

It localises to the nucleus. The protein localises to the cytoplasm. The protein resides in the cytoskeleton. It is found in the chromosome. Its subcellular location is the centromere. It localises to the kinetochore. In terms of biological role, acts as one of several non-catalytic accessory components of the cytoplasmic dynein 1 complex that are thought to be involved in linking dynein to cargos and to adapter proteins that regulate dynein function. Cytoplasmic dynein 1 acts as a motor for the intracellular retrograde motility of vesicles and organelles along microtubules. Probably binds BUB3 as part of transport cargo. Required for the efficient progression through mitosis. The polypeptide is Dynein light chain Tctex-type 3 (Dynlt3) (Mus musculus (Mouse)).